The following is a 321-amino-acid chain: Ribosomal RNA small subunit methyltransferase H (321 aa).

S-adenosyl-L-methionine is bound by residues 42–44 (GGH), Asp62, Phe86, Asp107, and Gln114.

Belongs to the methyltransferase superfamily. RsmH family.

It localises to the cytoplasm. It carries out the reaction cytidine(1402) in 16S rRNA + S-adenosyl-L-methionine = N(4)-methylcytidine(1402) in 16S rRNA + S-adenosyl-L-homocysteine + H(+). Specifically methylates the N4 position of cytidine in position 1402 (C1402) of 16S rRNA. The chain is Ribosomal RNA small subunit methyltransferase H from Herminiimonas arsenicoxydans.